A 365-amino-acid chain; its full sequence is Heterogeneous nuclear ribonucleoproteins A1 homolog (365 aa).

Residues 4-94 (SEAPNEPEQL…EPKRAVSRED (91 aa)) form a globular A domain region. RRM domains are found at residues 14–97 (RKLF…DSSR) and 105–184 (KKIF…LSKQ). The globular B domain stretch occupies residues 95 to 185 (SSRPGAHLTV…QVRKALSKQE (91 aa)). Disordered stretches follow at residues 175 to 208 (SQVR…RGGF) and 328 to 365 (GPMK…GRRF). 2 stretches are compositionally biased toward gly residues: residues 198–208 (GSGNYGSRGGF) and 330–365 (MKGG…GRRF). The nuclear targeting sequence stretch occupies residues 321 to 359 (SQSSSNFGPMKGGNYGGGRNSGPYGGGYGGGSASSSSGY).

It is found in the nucleus. It localises to the cytoplasm. Functionally, this protein is a component of ribonucleosomes. In Xenopus laevis (African clawed frog), this protein is Heterogeneous nuclear ribonucleoproteins A1 homolog (hnrnpa1).